The chain runs to 240 residues: Ubiquinone biosynthesis O-methyltransferase (240 aa).

Residues Arg44, Gly64, Asp85, and Met129 each contribute to the S-adenosyl-L-methionine site.

This sequence belongs to the methyltransferase superfamily. UbiG/COQ3 family.

It catalyses the reaction a 3-demethylubiquinol + S-adenosyl-L-methionine = a ubiquinol + S-adenosyl-L-homocysteine + H(+). The catalysed reaction is a 3-(all-trans-polyprenyl)benzene-1,2-diol + S-adenosyl-L-methionine = a 2-methoxy-6-(all-trans-polyprenyl)phenol + S-adenosyl-L-homocysteine + H(+). Its pathway is cofactor biosynthesis; ubiquinone biosynthesis. In terms of biological role, O-methyltransferase that catalyzes the 2 O-methylation steps in the ubiquinone biosynthetic pathway. The protein is Ubiquinone biosynthesis O-methyltransferase of Escherichia coli O81 (strain ED1a).